A 267-amino-acid polypeptide reads, in one-letter code: Small ribosomal subunit protein uS3 (267 aa).

Residues 43-111 (IRKEMSKDLE…QVQLNIFEVK (69 aa)) form the KH type-2 domain. The interval 216-267 (FEEQQAQQNNRPGRRGGDRRPRRGNRSAAPQAAEAPKAEAPAEAAPAAETKE) is disordered. Residues 241-267 (RSAAPQAAEAPKAEAPAEAAPAAETKE) show a composition bias toward low complexity.

The protein belongs to the universal ribosomal protein uS3 family. In terms of assembly, part of the 30S ribosomal subunit. Forms a tight complex with proteins S10 and S14.

In terms of biological role, binds the lower part of the 30S subunit head. Binds mRNA in the 70S ribosome, positioning it for translation. This is Small ribosomal subunit protein uS3 from Bifidobacterium longum subsp. infantis (strain ATCC 15697 / DSM 20088 / JCM 1222 / NCTC 11817 / S12).